The chain runs to 520 residues: Retinoic acid receptor RXR-beta (520 aa).

The interval 1-167 (MSWATRPPFL…GGSGPPEDVK (167 aa)) is disordered. The tract at residues 1 to 191 (MSWATRPPFL…PGGPGAGKRL (191 aa)) is modulating. Omega-N-methylarginine is present on arginine 25. The span at 64–79 (EAGRDGMGDSGRDSRS) shows a compositional bias: basic and acidic residues. Residues 95-118 (SSPPGPPLTPSAPPPPMPPPPLGS) show a composition bias toward pro residues. Low complexity predominate over residues 119 to 130 (PFPVISSSMGSP). Positions 131–140 (GLPPPAPPGF) are enriched in pro residues. NR C4-type zinc fingers lie at residues 192–212 (CAICGDRSSGKHYGVYSCEGC) and 228–252 (CRDNKDCTVDKRQRNRCQYCRYQKC). Positions 192–257 (CAICGDRSSG…RYQKCLATGM (66 aa)) form a DNA-binding region, nuclear receptor. The tract at residues 258 to 382 (KREAVQEERQ…HRSIDVRDGI (125 aa)) is hinge. Over residues 263–275 (QEERQRGKDKDGD) the composition is skewed to basic and acidic residues. 2 disordered regions span residues 263 to 285 (QEERQRGKDKDGDGDGAGGAPEE) and 300 to 323 (QKSDQGVEGPGATGGGGSSPNDPV). The region spanning 283-516 (PEEMPVDRIL…TFLMEMLEAP (234 aa)) is the NR LBD domain. Over residues 307–317 (EGPGATGGGGS) the composition is skewed to gly residues.

The protein belongs to the nuclear hormone receptor family. NR2 subfamily. In terms of assembly, homodimer (in vitro). Heterodimer with other retinoic acid receptor family members. Binds DNA preferentially as a RAR/RXR heterodimer. Interacts with NR1H3. Interacts with AKAP13. In terms of tissue distribution, in all tissues tested, including brain, thymus, spleen and liver.

Its subcellular location is the nucleus. The protein localises to the cytoplasm. Functionally, receptor for retinoic acid. Retinoic acid receptors bind as heterodimers to their target response elements in response to their ligands, all-trans or 9-cis retinoic acid, and regulate gene expression in various biological processes. The RAR/RXR heterodimers bind to the retinoic acid response elements (RARE). This Mus musculus (Mouse) protein is Retinoic acid receptor RXR-beta (Rxrb).